Reading from the N-terminus, the 465-residue chain is Ubiquitin carboxyl-terminal hydrolase UCH54 (465 aa).

The 323-residue stretch at 11–333 folds into the UCH catalytic domain; the sequence is EWCLIESNPC…VRFNIIAVMK (323 aa). The Nucleophile role is filled by Cys-145. The Proton donor role is filled by His-220. A disordered region spans residues 244–293; it reads INADEQNKPNPNNNNNNKDNDNDNNNNNNNNNNNNNNNNNNNNNNNNNNI. Residues 251–292 are compositionally biased toward low complexity; sequence KPNPNNNNNNKDNDNDNNNNNNNNNNNNNNNNNNNNNNNNNN. Residues 432–460 enclose the ULD domain; sequence NFYPFIMSSLNLMAKHKLLKDAYQKEKLK.

Belongs to the peptidase C12 family.

The enzyme catalyses Thiol-dependent hydrolysis of ester, thioester, amide, peptide and isopeptide bonds formed by the C-terminal Gly of ubiquitin (a 76-residue protein attached to proteins as an intracellular targeting signal).. Thiol protease that recognizes and hydrolyzes a peptide bond at the C-terminal glycine of either ubiquitin or NEDD8. This Plasmodium falciparum (isolate 3D7) protein is Ubiquitin carboxyl-terminal hydrolase UCH54.